Consider the following 184-residue polypeptide: Ribosome-recycling factor (184 aa).

The protein belongs to the RRF family.

It localises to the cytoplasm. In terms of biological role, responsible for the release of ribosomes from messenger RNA at the termination of protein biosynthesis. May increase the efficiency of translation by recycling ribosomes from one round of translation to another. The protein is Ribosome-recycling factor of Psychrobacter arcticus (strain DSM 17307 / VKM B-2377 / 273-4).